The primary structure comprises 544 residues: Phenylalanine--tRNA ligase beta subunit (544 aa).

Residues Leu270 to Val346 enclose the B5 domain. Mg(2+) contacts are provided by Asp324, Asp330, Glu333, and Asp334.

Belongs to the phenylalanyl-tRNA synthetase beta subunit family. Type 2 subfamily. As to quaternary structure, tetramer of two alpha and two beta subunits. It depends on Mg(2+) as a cofactor.

The protein localises to the cytoplasm. It catalyses the reaction tRNA(Phe) + L-phenylalanine + ATP = L-phenylalanyl-tRNA(Phe) + AMP + diphosphate + H(+). The chain is Phenylalanine--tRNA ligase beta subunit from Methanosarcina barkeri (strain Fusaro / DSM 804).